A 342-amino-acid polypeptide reads, in one-letter code: WW domain binding protein 1-like (342 aa).

A helical transmembrane segment spans residues leucine 42 to histidine 62. Disordered regions lie at residues leucine 133–threonine 247 and proline 292–alanine 320. Low complexity predominate over residues serine 158 to serine 173. The residue at position 173 (serine 173) is a Phosphoserine. The segment covering leucine 212–proline 240 has biased composition (basic and acidic residues).

The protein localises to the membrane. This is WW domain binding protein 1-like (WBP1L) from Homo sapiens (Human).